The primary structure comprises 525 residues: G-protein regulator 1 (525 aa).

Residues 424–445 (PVDMMDLIFSMSSRMDDQRTEL) form the GoLoco domain. Positions 488–525 (HTMNRILKRSKKSKSSLDSTNSMQGDDTRSDDVTMTSK) are disordered.

Interacts with gpr-1, lin-5 and GDP-bound goa-1.

The protein resides in the cytoplasm. Its subcellular location is the cell cortex. It localises to the cytoskeleton. The protein localises to the spindle. Its function is as follows. In the 1-cell embryo, probably together with gpr-2, controls nuclear rotation and spindle elongation during mitosis. Complex of gpr-1 and gpr-2, in association with lin-5, activates G-protein signaling to affect mitotic spindle force. Polarity determinants (par genes) may regulate lin-5/gpr-1/gpr-2/goa-1 locally to create the asymmetric forces that drive spindle movement. In Caenorhabditis elegans, this protein is G-protein regulator 1 (gpr-1).